Consider the following 1446-residue polypeptide: Sister chromatid cohesion protein PDS5 homolog B (1446 aa).

One copy of the HEAT repeat lies at 383–419 (LLVNDHLLNFVRERTLDKRWRVRKEAMMGLAQIYKKY). Residue lysine 1136 is modified to N6-acetyllysine. Over residues 1137–1155 (PLSSAGKQSQTKSSRMETV) the composition is skewed to polar residues. Residues 1137–1446 (PLSSAGKQSQ…RRRSSKRERR (310 aa)) form a disordered region. Phosphoserine occurs at positions 1140, 1162, 1166, 1176, 1182, and 1191. Over residues 1156–1167 (SNASSSSNPSSP) the composition is skewed to low complexity. Over residues 1172–1184 (GRLDSSEMDHSEN) the composition is skewed to basic and acidic residues. 2 stretches are compositionally biased toward basic and acidic residues: residues 1196–1212 (KKSD…LEKP) and 1223–1241 (PEEK…EQKP). Residues 1243-1252 (GSQRGRKRGR) are compositionally biased toward basic residues. The segment at residues 1247–1259 (GRKRGRTASDSDE) is a DNA-binding region (a.T hook 1). Residue threonine 1253 is modified to Phosphothreonine. 2 positions are modified to phosphoserine: serine 1255 and serine 1257. Over residues 1263–1272 (PEEKRHKEEL) the composition is skewed to basic and acidic residues. Phosphoserine is present on serine 1281. Positions 1285 to 1297 (KGKRGRPPKPLGG) form a DNA-binding region, a.T hook 2. Composition is skewed to basic residues over residues 1308–1317 (TSKKGNKKKL) and 1339–1351 (SKSK…KRAQ). Polar residues predominate over residues 1353-1370 (RAESPETSAVESTQSTPQ). Serine 1356 and serine 1364 each carry phosphoserine. Threonine 1365 is subject to Phosphothreonine. Position 1367 is a phosphoserine (serine 1367). Threonine 1368 is modified (phosphothreonine). The a.T hook 3 DNA-binding region spans 1370–1382 (QKGRGRPSKAPSP). Phosphoserine is present on residues serine 1381, serine 1415, and serine 1418. The span at 1421-1431 (TTQEGAEEEDI) shows a compositional bias: acidic residues. A compositionally biased stretch (basic residues) spans 1436 to 1446 (VRRRSSKRERR).

It belongs to the PDS5 family. In terms of assembly, interacts with the cohesin complex. Interacts with RAD21; the interaction is direct. Interacts with WAPL (via FGF motifs) or CDCA5 (via the FGF motif); the interaction is direct, cohesin-dependent and competitive. Expressed in prostate.

The protein resides in the nucleus. Functionally, regulator of sister chromatid cohesion in mitosis which may stabilize cohesin complex association with chromatin. May couple sister chromatid cohesion during mitosis to DNA replication. Cohesion ensures that chromosome partitioning is accurate in both meiotic and mitotic cells and plays an important role in DNA repair. Plays a role in androgen-induced proliferative arrest in prostate cells. This Mus musculus (Mouse) protein is Sister chromatid cohesion protein PDS5 homolog B (Pds5b).